A 247-amino-acid chain; its full sequence is 3-deoxy-manno-octulosonate cytidylyltransferase (247 aa).

It belongs to the KdsB family.

The protein localises to the cytoplasm. It carries out the reaction 3-deoxy-alpha-D-manno-oct-2-ulosonate + CTP = CMP-3-deoxy-beta-D-manno-octulosonate + diphosphate. Its pathway is nucleotide-sugar biosynthesis; CMP-3-deoxy-D-manno-octulosonate biosynthesis; CMP-3-deoxy-D-manno-octulosonate from 3-deoxy-D-manno-octulosonate and CTP: step 1/1. The protein operates within bacterial outer membrane biogenesis; lipopolysaccharide biosynthesis. Functionally, activates KDO (a required 8-carbon sugar) for incorporation into bacterial lipopolysaccharide in Gram-negative bacteria. The polypeptide is 3-deoxy-manno-octulosonate cytidylyltransferase (Chlorobium phaeovibrioides (strain DSM 265 / 1930) (Prosthecochloris vibrioformis (strain DSM 265))).